The primary structure comprises 511 residues: Chromosomal replication initiator protein DnaA (511 aa).

Residues 1 to 90 form a domain I, interacts with DnaA modulators region; it reads MSVELWQQCV…RRSSAPRAAP (90 aa). Residues 91-174 are domain II; it reads NAPVSAAMAA…QVEGALKHTS (84 aa). The interval 125-161 is disordered; that stretch reads TAEPAQASDMAEASSRDSYDSMADSAPAPVAPGRTEQ. The tract at residues 175–391 is domain III, AAA+ region; the sequence is YLNRTFTFET…GALKRVIAHS (217 aa). Residues Gly219, Gly221, Lys222, and Thr223 each contribute to the ATP site. A domain IV, binds dsDNA region spans residues 392–511; sequence HFMGRDITIE…YKNLLRTLTT (120 aa).

It belongs to the DnaA family. Oligomerizes as a right-handed, spiral filament on DNA at oriC.

The protein localises to the cytoplasm. Plays an essential role in the initiation and regulation of chromosomal replication. ATP-DnaA binds to the origin of replication (oriC) to initiate formation of the DNA replication initiation complex once per cell cycle. Binds the DnaA box (a 9 base pair repeat at the origin) and separates the double-stranded (ds)DNA. Forms a right-handed helical filament on oriC DNA; dsDNA binds to the exterior of the filament while single-stranded (ss)DNA is stabiized in the filament's interior. The ATP-DnaA-oriC complex binds and stabilizes one strand of the AT-rich DNA unwinding element (DUE), permitting loading of DNA polymerase. After initiation quickly degrades to an ADP-DnaA complex that is not apt for DNA replication. Binds acidic phospholipids. The sequence is that of Chromosomal replication initiator protein DnaA from Pseudomonas putida (strain W619).